Reading from the N-terminus, the 382-residue chain is D-galactonate dehydratase (382 aa).

D183 provides a ligand contact to Mg(2+). Catalysis depends on H185, which acts as the Proton donor. Residues E209 and E235 each contribute to the Mg(2+) site. The Proton acceptor role is filled by H285.

It belongs to the mandelate racemase/muconate lactonizing enzyme family. GalD subfamily. It depends on Mg(2+) as a cofactor.

The catalysed reaction is D-galactonate = 2-dehydro-3-deoxy-D-galactonate + H2O. It functions in the pathway carbohydrate acid metabolism; D-galactonate degradation; D-glyceraldehyde 3-phosphate and pyruvate from D-galactonate: step 1/3. Its function is as follows. Catalyzes the dehydration of D-galactonate to 2-keto-3-deoxy-D-galactonate. The chain is D-galactonate dehydratase from Ralstonia pickettii (strain 12J).